Consider the following 288-residue polypeptide: Shikimate dehydrogenase (NADP(+)) (288 aa).

Shikimate-binding positions include 22–24 (SLS) and Thr-69. Catalysis depends on Lys-73, which acts as the Proton acceptor. Residues Asn-94 and Asp-110 each coordinate shikimate. Residues 131-135 (GSGGA) and Leu-228 contribute to the NADP(+) site. Tyr-230 is a binding site for shikimate. Gly-251 contributes to the NADP(+) binding site.

The protein belongs to the shikimate dehydrogenase family. Homodimer.

It catalyses the reaction shikimate + NADP(+) = 3-dehydroshikimate + NADPH + H(+). It functions in the pathway metabolic intermediate biosynthesis; chorismate biosynthesis; chorismate from D-erythrose 4-phosphate and phosphoenolpyruvate: step 4/7. Involved in the biosynthesis of the chorismate, which leads to the biosynthesis of aromatic amino acids. Catalyzes the reversible NADPH linked reduction of 3-dehydroshikimate (DHSA) to yield shikimate (SA). The polypeptide is Shikimate dehydrogenase (NADP(+)) (Synechococcus sp. (strain JA-2-3B'a(2-13)) (Cyanobacteria bacterium Yellowstone B-Prime)).